Consider the following 27-residue polypeptide: Caerulein precursor fragment R4 (27 aa).

In terms of tissue distribution, expressed by the skin glands.

The protein resides in the secreted. In terms of biological role, antimicrobial peptide. The protein is Caerulein precursor fragment R4 of Xenopus ruwenzoriensis (Uganda clawed frog).